A 104-amino-acid chain; its full sequence is Ycf49-like protein (104 aa).

3 helical membrane passes run 6-26 (IPTWMVHVSSVIEWIVAIALV), 41-61 (LAWGMVPALVSATCACTWHFF), and 73-93 (LQALTTVIGNITLCLAAWWIY).

Belongs to the ycf49 family.

It is found in the cell membrane. The protein is Ycf49-like protein of Synechocystis sp. (strain ATCC 27184 / PCC 6803 / Kazusa).